Here is a 692-residue protein sequence, read N- to C-terminus: DNA ligase (692 aa).

NAD(+)-binding positions include 40–44, 89–90, and Glu-121; these read DAAYD and SL. Lys-123 functions as the N6-AMP-lysine intermediate in the catalytic mechanism. Residues Arg-144, Glu-181, Lys-297, and Lys-321 each coordinate NAD(+). Zn(2+)-binding residues include Cys-415, Cys-417, Cys-439, and Cys-445. A BRCT domain is found at 614–692; it reads KTDTAVAGKT…EDEWLEMVGS (79 aa).

This sequence belongs to the NAD-dependent DNA ligase family. LigA subfamily. Requires Mg(2+) as cofactor. Mn(2+) serves as cofactor.

The enzyme catalyses NAD(+) + (deoxyribonucleotide)n-3'-hydroxyl + 5'-phospho-(deoxyribonucleotide)m = (deoxyribonucleotide)n+m + AMP + beta-nicotinamide D-nucleotide.. DNA ligase that catalyzes the formation of phosphodiester linkages between 5'-phosphoryl and 3'-hydroxyl groups in double-stranded DNA using NAD as a coenzyme and as the energy source for the reaction. It is essential for DNA replication and repair of damaged DNA. This chain is DNA ligase, found in Phenylobacterium zucineum (strain HLK1).